The sequence spans 105 residues: uncharacterized protein (105 aa).

The Hcy-binding domain maps to 1–101 (MMDLGDKINP…KDIQEISAAV (101 aa)).

This is an uncharacterized protein from Saccharomyces cerevisiae (strain ATCC 204508 / S288c) (Baker's yeast).